A 533-amino-acid chain; its full sequence is MSAPVPQLVNISHALQASTIQQIRLDMVDFNKDCKLSSIQLARIDKYIDSLQAALNQFTKDNLHIERKEKNVTEADIQLYSGLKSMYLDYLNQLIKLKHEKQHHSTPPIANDVSLDFFVNQLPKFSPEERKNYIDNLILNKNSHNRLSKMDGLVDAVINLCVLDTSVAENVRSYMKLLDTLGFQKGSNSTGTKANLKKKLASSKAKIKDSEKEKEKEKDKSKVKMKTKLKPSPLLNNDDKNSSPSPTASTSSMKKLKSGLFNKNEAKSTESLPTSSKKKLSFSKYLNKDDADMTKLGTKRSIDVDFKVNPEASTVASNIISSSTSGSSTTTVATPASSEEPLKKKTKISVQDSNVQSILRNGKPKKARISSIKFLDDSQLIKVYGDDLPNQGLQVSPTQLKKILKPFKEGEPKEIILFEDMSIKLKPLDLMFLKNTNSDDYMDISETKGGPIHCETRTPLIYRKNFNHFNPDLNKRPPREPIEFDLNGNTNSTPTIAKAFGKNSLLLRKDRGGLPYKHVPIVKRNKYPPRPVH.

Disordered stretches follow at residues 187–254 (SNST…SSMK), 260–279 (LFNKNEAKSTESLPTSSKKK), and 321–344 (SSSTSGSSTTTVATPASSEEPLKK). Over residues 206 to 222 (KIKDSEKEKEKEKDKSK) the composition is skewed to basic and acidic residues. A compositionally biased stretch (low complexity) spans 242-252 (SSPSPTASTSS). A compositionally biased stretch (low complexity) spans 321–338 (SSSTSGSSTTTVATPASS).

Interacts with FIR1. Component of the cleavage and polyadenylation factor (CPF) complex, which is composed of PTI1, SYC1, SSU72, GLC7, MPE1, REF2, PFS2, PTA1, YSH1/BRR5, SWD2, CFT2/YDH1, YTH1, CFT1/YHH1, FIP1 and PAP1. Component of the APT complex, which is a subcomplex of CPF, and is composed of PTI1, SYC1, SSU72, GLC7, REF2, PTA1 and SWD2.

It localises to the nucleus. In terms of biological role, RNA-binding component of the cleavage and polyadenylation factor (CPF) complex, which plays a key role in polyadenylation-dependent pre-mRNA 3'-end formation and cooperates with cleavage factors including the CFIA complex and NAB4/CFIB. Negative regulator of poly(A) synthesis. Component of the APT complex, which may be involved in polyadenylation-independent transcript 3'-end formation. REF2 is required for 3'-end formation of snoRNAs. The sequence is that of RNA end formation protein 2 (REF2) from Saccharomyces cerevisiae (strain ATCC 204508 / S288c) (Baker's yeast).